The sequence spans 159 residues: MFPFALLYVLSVSFRKIFILQLVGLVLTYDFTNCDFEKIKAAYLSTISKDLITYMSGTKSTEFNNTVSCSNRPHCLTEIQSLTFNPTAGCASLAKEMFAMKTKAALAIWCPGYSETQINATQAMKKRRKRKVTTNKCLEQVSQLQGLWRRFNRPLLKQQ.

An N-terminal signal peptide occupies residues 1 to 28 (MFPFALLYVLSVSFRKIFILQLVGLVLT). Intrachain disulfides connect Cys-34/Cys-110, Cys-69/Cys-75, and Cys-90/Cys-137. Asn-64 carries N-linked (GlcNAc...) asparagine glycosylation. Residue Asn-119 is glycosylated (N-linked (GlcNAc...) asparagine).

Interacts with a receptor composed of CRLF2 and IL7R. Binding of TSLP to CRLF2/TSLPR is a mechanistic prerequisite for recruitment of IL7R to the high-affinity ternary complex. Isoform 1 is expressed in a number of tissues including heart, liver and prostate. Isoform 2 is the predominant form in keratinocytes of oral mucosa, skin and in salivary glands. It is secreted into saliva.

The protein resides in the secreted. Functionally, cytokine that induces the release of T-cell-attracting chemokines from monocytes and, in particular, enhances the maturation of CD11c(+) dendritic cells. Can induce allergic inflammation by directly activating mast cells. Its function is as follows. May act as an antimicrobial peptide in the oral cavity and on the skin. This Homo sapiens (Human) protein is Thymic stromal lymphopoietin (TSLP).